A 339-amino-acid chain; its full sequence is DNA-directed RNA polymerase subunit alpha (339 aa).

Positions 1–233 are alpha N-terminal domain (alpha-NTD); that stretch reads MVREEVAGST…DLFLPFLHAE (233 aa). Positions 264-339 are alpha C-terminal domain (alpha-CTD); that stretch reads KKGIPLNCIF…IDLLKNKLSF (76 aa).

It belongs to the RNA polymerase alpha chain family. In plastids the minimal PEP RNA polymerase catalytic core is composed of four subunits: alpha, beta, beta', and beta''. When a (nuclear-encoded) sigma factor is associated with the core the holoenzyme is formed, which can initiate transcription.

It localises to the plastid. The protein localises to the chloroplast. The enzyme catalyses RNA(n) + a ribonucleoside 5'-triphosphate = RNA(n+1) + diphosphate. Functionally, DNA-dependent RNA polymerase catalyzes the transcription of DNA into RNA using the four ribonucleoside triphosphates as substrates. The polypeptide is DNA-directed RNA polymerase subunit alpha (Festucopsis serpentini).